The sequence spans 240 residues: Tubulin alpha chain (240 aa).

N17 lines the GTP pocket. Residue E43 is part of the active site.

This sequence belongs to the tubulin family. In terms of assembly, dimer of alpha and beta chains. A typical microtubule is a hollow water-filled tube with an outer diameter of 25 nm and an inner diameter of 15 nM. Alpha-beta heterodimers associate head-to-tail to form protofilaments running lengthwise along the microtubule wall with the beta-tubulin subunit facing the microtubule plus end conferring a structural polarity. Microtubules usually have 13 protofilaments but different protofilament numbers can be found in some organisms and specialized cells. Requires Mg(2+) as cofactor. In terms of processing, undergoes a tyrosination/detyrosination cycle, the cyclic removal and re-addition of a C-terminal tyrosine residue by the enzymes tubulin tyrosine carboxypeptidase (TTCP) and tubulin tyrosine ligase (TTL), respectively.

The protein resides in the cytoplasm. Its subcellular location is the cytoskeleton. The catalysed reaction is GTP + H2O = GDP + phosphate + H(+). Tubulin is the major constituent of microtubules, a cylinder consisting of laterally associated linear protofilaments composed of alpha- and beta-tubulin heterodimers. Microtubules grow by the addition of GTP-tubulin dimers to the microtubule end, where a stabilizing cap forms. Below the cap, tubulin dimers are in GDP-bound state, owing to GTPase activity of alpha-tubulin. The chain is Tubulin alpha chain from Octopus vulgaris (Common octopus).